The sequence spans 1997 residues: Receptor-type tyrosine-protein phosphatase beta (1997 aa).

An N-terminal signal peptide occupies residues 1–22 (MLSHGAGLALWITLSLLQTGLA). Fibronectin type-III domains lie at 23 to 111 (EPER…TDPL), 112 to 207 (PPAR…SPVK), 203 to 288 (PSPV…VRTA), 291 to 378 (EVSN…TFPD), 379 to 471 (KVAN…LAVL), 467 to 552 (PLAV…KGRT), 556 to 641 (QVTD…EGRT), 642 to 729 (VPSS…QERT), 730 to 829 (VPDK…TLRN), 819 to 906 (PEPV…GFTV), 909 to 1001 (AVKN…VQGV), 995 to 1083 (PASV…EGRT), 1087 to 1175 (AVTD…VPAS), 1173 to 1260 (PASV…SRTA), 1260 to 1356 (APSP…TKPD), 1357 to 1448 (KIQN…IDRP), and 1458 to 1554 (NEKD…EMES). Over 23–1621 (EPERCNFTLA…ESEPLFGAIE (1599 aa)) the chain is Extracellular. 16 N-linked (GlcNAc...) asparagine glycosylation sites follow: Asn28, Asn53, Asn75, Asn172, Asn198, Asn267, Asn321, Asn414, Asn421, Asn479, Asn544, Asn574, Asn598, Asn652, Asn721, and Asn829. 10 N-linked (GlcNAc...) asparagine glycosylation sites follow: Asn1040, Asn1096, Asn1163, Asn1185, Asn1212, Asn1274, Asn1367, Asn1470, Asn1474, and Asn1518. A helical transmembrane segment spans residues 1622–1642 (GVSAGLFLIGMLVAVVALLIC). Residues 1643–1997 (RQKVSHGRER…YHRDPVYSRH (355 aa)) lie on the Cytoplasmic side of the membrane. A Tyrosine-protein phosphatase domain is found at 1703–1963 (LSKEYEELKD…VYLHQCVRDV (261 aa)). Substrate is bound by residues Asp1870, 1904–1910 (CSAGVGR), and Gln1948. The active-site Phosphocysteine intermediate is the Cys1904. Tyr1981 is modified (phosphotyrosine).

This sequence belongs to the protein-tyrosine phosphatase family. Receptor class 3 subfamily. In terms of assembly, monomer. Interacts with TEK. Interacts via fibronectin type-III 17 domain with CDH5. Detected in a complex with CNTN1 and NRCAM. Interacts (phosphorylated form) with FYN and GRB2. Interacts with IGFBP2.

The protein localises to the membrane. It catalyses the reaction O-phospho-L-tyrosyl-[protein] + H2O = L-tyrosyl-[protein] + phosphate. In terms of biological role, plays an important role in blood vessel remodeling and angiogenesis. Not necessary for the initial formation of blood vessels, but is essential for their maintenance and remodeling. Can induce dephosphorylation of TEK/TIE2, CDH5/VE-cadherin and KDR/VEGFR-2. Regulates angiopoietin-TIE2 signaling in endothelial cells. Acts as a negative regulator of TIE2, and controls TIE2 driven endothelial cell proliferation, which in turn affects blood vessel remodeling during embryonic development and determines blood vessel size during perinatal growth. Essential for the maintenance of endothelial cell contact integrity and for the adhesive function of VE-cadherin in endothelial cells and this requires the presence of plakoglobin. The protein is Receptor-type tyrosine-protein phosphatase beta (PTPRB) of Homo sapiens (Human).